Reading from the N-terminus, the 954-residue chain is uncharacterized protein (954 aa).

Positions 1-35 are cleaved as a signal peptide; sequence MKILFNNTFELFCLFVFVTWALFLNNNGILYPVHC. Residues 381–415 are a coiled coil; the sequence is KNKISSARDDIQKDINKMESELINVSNEINRLDIV. Positions 733–765 are disordered; it reads NIRNDNNNNNNNNNNNSNNNNNNNNNNKDNSVA. Residues 736–763 are compositionally biased toward low complexity; the sequence is NDNNNNNNNNNNNSNNNNNNNNNNKDNS.

This is an uncharacterized protein from Plasmodium falciparum (isolate 3D7).